Reading from the N-terminus, the 37-residue chain is Cytochrome b6-f complex subunit 5 (37 aa).

The chain crosses the membrane as a helical span at residues 5-25; the sequence is LLSGIILGLIPVTLSGLLVAA.

Belongs to the PetG family. As to quaternary structure, the 4 large subunits of the cytochrome b6-f complex are cytochrome b6, subunit IV (17 kDa polypeptide, PetD), cytochrome f and the Rieske protein, while the 4 small subunits are PetG, PetL, PetM and PetN. The complex functions as a dimer.

The protein localises to the plastid. It is found in the chloroplast thylakoid membrane. Functionally, component of the cytochrome b6-f complex, which mediates electron transfer between photosystem II (PSII) and photosystem I (PSI), cyclic electron flow around PSI, and state transitions. PetG is required for either the stability or assembly of the cytochrome b6-f complex. This is Cytochrome b6-f complex subunit 5 from Porphyra purpurea (Red seaweed).